Consider the following 317-residue polypeptide: Acetyl-coenzyme A carboxylase carboxyl transferase subunit alpha (317 aa).

The CoA carboxyltransferase C-terminal domain occupies 33-294 (NINKEINCLR…KNRILKDLKE (262 aa)).

This sequence belongs to the AccA family. Acetyl-CoA carboxylase is a heterohexamer composed of biotin carboxyl carrier protein (AccB), biotin carboxylase (AccC) and two subunits each of ACCase subunit alpha (AccA) and ACCase subunit beta (AccD).

Its subcellular location is the cytoplasm. The enzyme catalyses N(6)-carboxybiotinyl-L-lysyl-[protein] + acetyl-CoA = N(6)-biotinyl-L-lysyl-[protein] + malonyl-CoA. Its pathway is lipid metabolism; malonyl-CoA biosynthesis; malonyl-CoA from acetyl-CoA: step 1/1. Its function is as follows. Component of the acetyl coenzyme A carboxylase (ACC) complex. First, biotin carboxylase catalyzes the carboxylation of biotin on its carrier protein (BCCP) and then the CO(2) group is transferred by the carboxyltransferase to acetyl-CoA to form malonyl-CoA. The sequence is that of Acetyl-coenzyme A carboxylase carboxyl transferase subunit alpha from Wigglesworthia glossinidia brevipalpis.